The primary structure comprises 217 residues: Ribosomal RNA small subunit methyltransferase G (217 aa).

Residues Gly79, Phe84, 130-131 (AE), and Arg148 contribute to the S-adenosyl-L-methionine site.

The protein belongs to the methyltransferase superfamily. RNA methyltransferase RsmG family.

It localises to the cytoplasm. The catalysed reaction is guanosine(527) in 16S rRNA + S-adenosyl-L-methionine = N(7)-methylguanosine(527) in 16S rRNA + S-adenosyl-L-homocysteine. Its function is as follows. Specifically methylates the N7 position of guanine in position 527 of 16S rRNA. The chain is Ribosomal RNA small subunit methyltransferase G from Myxococcus xanthus (strain DK1622).